A 216-amino-acid polypeptide reads, in one-letter code: Golgi to ER traffic protein 1 (216 aa).

Residues 1–9 (MFDISSSNL) lie on the Lumenal side of the membrane. A helical transmembrane segment spans residues 10–29 (LISVLVVLFAKQLINAVGKA). The Cytoplasmic segment spans residues 30–116 (TLENIGWSAY…YISKYIGYMI (87 aa)). Positions 54-105 (LDQKNVELAKVSKERKSISAQDQYARWTKLNRQFDKLTGEINKLKEETSASR) form a coiled coil. A helical membrane pass occupies residues 117 to 137 (LVTTTLPIWFFRVWFRKAVLF). At 138–161 (YFPTGVLPHYLEWFLALPFITTGG) the chain is on the lumenal side. The chain crosses the membrane as a helical span at residues 162–178 (VGLTIWMSAVNNVVSSV). At 179–216 (IFLVKFPFEKEVPFPSKEVGNEKTSINKEEVSGTPAAN) the chain is on the cytoplasmic side. Positions 193–216 (PSKEVGNEKTSINKEEVSGTPAAN) are disordered. Residues 197–209 (VGNEKTSINKEEV) show a composition bias toward basic and acidic residues.

The protein belongs to the WRB/GET1 family. As to quaternary structure, component of the Golgi to ER traffic (GET) complex, which is composed of GET1, GET2 and GET3. Within the complex, GET1 and GET2 form a heterotetramer which is stabilized by phosphatidylinositol binding and which binds to the GET3 homodimer.

The protein localises to the endoplasmic reticulum membrane. It localises to the golgi apparatus membrane. In terms of biological role, required for the post-translational delivery of tail-anchored (TA) proteins to the endoplasmic reticulum. Together with GET2, acts as a membrane receptor for soluble GET3, which recognizes and selectively binds the transmembrane domain of TA proteins in the cytosol. The GET complex cooperates with the HDEL receptor ERD2 to mediate the ATP-dependent retrieval of resident ER proteins that contain a C-terminal H-D-E-L retention signal from the Golgi to the ER. The protein is Golgi to ER traffic protein 1 of Debaryomyces hansenii (strain ATCC 36239 / CBS 767 / BCRC 21394 / JCM 1990 / NBRC 0083 / IGC 2968) (Yeast).